The chain runs to 787 residues: Aminodeoxychorismate synthase (787 aa).

The region spanning 16–233 is the Glutamine amidotransferase type-1 domain; sequence HVLFIDSYDS…LKLSFINNVK (218 aa). Residues C112, H207, and E209 contribute to the active site. The segment at 304 to 787 is PABB component; sequence MSSSVISENT…KLESNLQIFM (484 aa).

This sequence in the C-terminal section; belongs to the anthranilate synthase component I family.

It is found in the cytoplasm. It catalyses the reaction chorismate + L-glutamine = 4-amino-4-deoxychorismate + L-glutamate. The protein operates within cofactor biosynthesis; tetrahydrofolate biosynthesis; 4-aminobenzoate from chorismate: step 1/2. Catalyzes the biosynthesis of 4-amino-4-deoxychorismate (ADC) from chorismate and glutamine. Required for the synthesis of 4-aminobenzoate (PABA), an important component in tetrahydrofolate biosynthesis. The polypeptide is Aminodeoxychorismate synthase (ABZ1) (Saccharomyces cerevisiae (strain ATCC 204508 / S288c) (Baker's yeast)).